A 1057-amino-acid chain; its full sequence is Carbamoyl phosphate synthase large chain (1057 aa).

Positions 1-401 (MPKRNDIKTI…SLLKAIRSLE (401 aa)) are carboxyphosphate synthetic domain. Residues arginine 129, arginine 169, glycine 175, glycine 176, lysine 208, isoleucine 210, glutamate 215, glycine 241, isoleucine 242, histidine 243, glutamine 284, and glutamate 298 each coordinate ATP. An ATP-grasp 1 domain is found at 133–327 (RTLMNDLNVP…IAKLAAKIAV (195 aa)). The Mg(2+) site is built by glutamine 284, glutamate 298, and asparagine 300. The Mn(2+) site is built by glutamine 284, glutamate 298, and asparagine 300. Positions 402–546 (YGVHHLGLPN…YGTYETENES (145 aa)) are oligomerization domain. Residues 547-929 (IVTDKEKILV…ALFKGLTGSG (383 aa)) are carbamoyl phosphate synthetic domain. One can recognise an ATP-grasp 2 domain in the interval 671-861 (EALLRKINVP…MAQLAMRAII (191 aa)). 10 residues coordinate ATP: arginine 707, arginine 746, leucine 748, glutamate 752, glycine 777, valine 778, histidine 779, serine 780, glutamine 820, and glutamate 832. Residues glutamine 820, glutamate 832, and asparagine 834 each contribute to the Mg(2+) site. The Mn(2+) site is built by glutamine 820, glutamate 832, and asparagine 834. The MGS-like domain maps to 930-1057 (VEVKDHGTVL…ESMTFTMRQM (128 aa)). The segment at 930-1057 (VEVKDHGTVL…ESMTFTMRQM (128 aa)) is allosteric domain.

This sequence belongs to the CarB family. As to quaternary structure, composed of two chains; the small (or glutamine) chain promotes the hydrolysis of glutamine to ammonia, which is used by the large (or ammonia) chain to synthesize carbamoyl phosphate. Tetramer of heterodimers (alpha,beta)4. The cofactor is Mg(2+). Mn(2+) is required as a cofactor.

It carries out the reaction hydrogencarbonate + L-glutamine + 2 ATP + H2O = carbamoyl phosphate + L-glutamate + 2 ADP + phosphate + 2 H(+). It catalyses the reaction hydrogencarbonate + NH4(+) + 2 ATP = carbamoyl phosphate + 2 ADP + phosphate + 2 H(+). The protein operates within amino-acid biosynthesis; L-arginine biosynthesis; carbamoyl phosphate from bicarbonate: step 1/1. It functions in the pathway pyrimidine metabolism; UMP biosynthesis via de novo pathway; (S)-dihydroorotate from bicarbonate: step 1/3. In terms of biological role, large subunit of the glutamine-dependent carbamoyl phosphate synthetase (CPSase). CPSase catalyzes the formation of carbamoyl phosphate from the ammonia moiety of glutamine, carbonate, and phosphate donated by ATP, constituting the first step of 2 biosynthetic pathways, one leading to arginine and/or urea and the other to pyrimidine nucleotides. The large subunit (synthetase) binds the substrates ammonia (free or transferred from glutamine from the small subunit), hydrogencarbonate and ATP and carries out an ATP-coupled ligase reaction, activating hydrogencarbonate by forming carboxy phosphate which reacts with ammonia to form carbamoyl phosphate. This is Carbamoyl phosphate synthase large chain from Staphylococcus aureus (strain MW2).